Here is a 1081-residue protein sequence, read N- to C-terminus: DNA primase (1081 aa).

Positions 484-497 (SPNKPQSVHSTPPL) are enriched in polar residues. The segment at 484 to 508 (SPNKPQSVHSTPPLDQSRGDELSPG) is disordered. A CHC2-type zinc finger spans residues 1024-1064 (CLRAKHLRSARGLARTFLSISADVHGRLCASISQQCFATKC).

It belongs to the herpesviridae DNA primase family. Associates with the helicase and the primase-associated factor to form the helicase-primase factor.

The protein resides in the host nucleus. Its function is as follows. Essential component of the helicase/primase complex. Unwinds the DNA at the replication forks and generates single-stranded DNA for both leading and lagging strand synthesis. The primase initiates primer synthesis and thereby produces large amount of short RNA primers on the lagging strand that the polymerase elongates using dNTPs. This chain is DNA primase, found in Equus caballus (Horse).